We begin with the raw amino-acid sequence, 340 residues long: Phosphate acyltransferase (340 aa).

The protein belongs to the PlsX family. In terms of assembly, homodimer. Probably interacts with PlsY.

Its subcellular location is the cytoplasm. The enzyme catalyses a fatty acyl-[ACP] + phosphate = an acyl phosphate + holo-[ACP]. It functions in the pathway lipid metabolism; phospholipid metabolism. Its function is as follows. Catalyzes the reversible formation of acyl-phosphate (acyl-PO(4)) from acyl-[acyl-carrier-protein] (acyl-ACP). This enzyme utilizes acyl-ACP as fatty acyl donor, but not acyl-CoA. This Nitrosococcus oceani (strain ATCC 19707 / BCRC 17464 / JCM 30415 / NCIMB 11848 / C-107) protein is Phosphate acyltransferase.